The chain runs to 461 residues: Flavin-containing monooxygenase FMO GS-OX4 (461 aa).

An FAD-binding site is contributed by 17–22 (GAGAAG). Residue 211–216 (GNFASG) participates in NADP(+) binding.

The protein belongs to the FMO family.

The catalysed reaction is a (Z)-omega-(methylsulfanyl)-N-sulfo-alkylhydroximate S-glucoside + NADPH + O2 + H(+) = a (Z)-omega-(methylsulfinyl)-alkyl-glucosinolate + NADP(+) + H2O. Its function is as follows. Catalyzes the conversion of methylthioalkyl glucosinolates of any chain length into methylsulfinylalkyl glucosinolates. This Arabidopsis thaliana (Mouse-ear cress) protein is Flavin-containing monooxygenase FMO GS-OX4 (FMOGS-OX4).